We begin with the raw amino-acid sequence, 114 residues long: Anti-adapter protein IraM (114 aa).

It belongs to the IraM/RssC family.

It is found in the cytoplasm. Involved in the stabilization of the sigma stress factor RpoS. This is Anti-adapter protein IraM from Citrobacter koseri (strain ATCC BAA-895 / CDC 4225-83 / SGSC4696).